Reading from the N-terminus, the 1390-residue chain is DNA-directed RNA polymerase subunit beta (1390 aa).

It belongs to the RNA polymerase beta chain family. In terms of assembly, the RNAP catalytic core consists of 2 alpha, 1 beta, 1 beta' and 1 omega subunit. When a sigma factor is associated with the core the holoenzyme is formed, which can initiate transcription.

It carries out the reaction RNA(n) + a ribonucleoside 5'-triphosphate = RNA(n+1) + diphosphate. Its function is as follows. DNA-dependent RNA polymerase catalyzes the transcription of DNA into RNA using the four ribonucleoside triphosphates as substrates. In Gluconobacter oxydans (strain 621H) (Gluconobacter suboxydans), this protein is DNA-directed RNA polymerase subunit beta.